Here is a 354-residue protein sequence, read N- to C-terminus: D-alanine--D-alanine ligase (354 aa).

Residues Lys132 to Gln342 enclose the ATP-grasp domain. Glu168–Val223 is an ATP binding site. 3 residues coordinate Mg(2+): Asp295, Glu309, and Asn311.

This sequence belongs to the D-alanine--D-alanine ligase family. Mg(2+) serves as cofactor. It depends on Mn(2+) as a cofactor.

Its subcellular location is the cytoplasm. It carries out the reaction 2 D-alanine + ATP = D-alanyl-D-alanine + ADP + phosphate + H(+). It participates in cell wall biogenesis; peptidoglycan biosynthesis. Its function is as follows. Cell wall formation. The polypeptide is D-alanine--D-alanine ligase (Synechocystis sp. (strain ATCC 27184 / PCC 6803 / Kazusa)).